The sequence spans 367 residues: Putative heat shock 70 kDa protein 7 (367 aa).

Belongs to the heat shock protein 70 family.

The protein is Putative heat shock 70 kDa protein 7 (HSPA7) of Homo sapiens (Human).